A 481-amino-acid chain; its full sequence is Lincomycin resistance protein (481 aa).

The next 14 membrane-spanning stretches (helical) occupy residues W30 to V50, Q67 to G87, L99 to L119, F127 to S147, V162 to S182, W185 to V205, P215 to V235, L245 to V265, L285 to L305, I318 to V338, G340 to P360, L374 to A394, L421 to G441, and F446 to A466.

Belongs to the major facilitator superfamily. TCR/Tet family.

The protein resides in the cell membrane. Proton-dependent transporter. May mediate the efflux of lincomycin. The chain is Lincomycin resistance protein (lmrA) from Streptomyces lincolnensis.